The sequence spans 1068 residues: Integrator complex subunit 3 homolog (1068 aa).

2 disordered regions span residues 916-939 (YPSS…STPS) and 1001-1068 (VGRR…NDSD). Ser-1038, Ser-1039, Ser-1043, and Ser-1044 each carry phosphoserine.

This sequence belongs to the Integrator subunit 3 family. Belongs to the multiprotein complex Integrator, at least composed of IntS1, IntS2, IntS3, IntS4, omd/IntS5, IntS6, defl/IntS7, IntS8, IntS9, IntS10, IntS11, IntS12, asun/IntS13, IntS14 and IntS15. The core complex associates with protein phosphatase 2A subunits mts/PP2A and Pp2A-29B, to form the Integrator-PP2A (INTAC) complex.

It localises to the nucleus. The protein resides in the cytoplasm. Functionally, component of the integrator complex, a multiprotein complex that terminates RNA polymerase II (Pol II) transcription in the promoter-proximal region of genes. The integrator complex provides a quality checkpoint during transcription elongation by driving premature transcription termination of transcripts that are unfavorably configured for transcriptional elongation: the complex terminates transcription by (1) catalyzing dephosphorylation of the C-terminal domain (CTD) of Pol II subunit Polr2A/Rbp1 and Spt5, and (2) degrading the exiting nascent RNA transcript via endonuclease activity. The integrator complex is also involved in the 3'-end processing of the U7 snRNA, and also the spliceosomal snRNAs U1, U2, U4 and U5. The chain is Integrator complex subunit 3 homolog (IntS3) from Drosophila sechellia (Fruit fly).